Reading from the N-terminus, the 132-residue chain is Small ribosomal subunit protein uS8 (132 aa).

The protein belongs to the universal ribosomal protein uS8 family. As to quaternary structure, part of the 30S ribosomal subunit. Contacts proteins S5 and S12.

One of the primary rRNA binding proteins, it binds directly to 16S rRNA central domain where it helps coordinate assembly of the platform of the 30S subunit. The sequence is that of Small ribosomal subunit protein uS8 from Streptococcus agalactiae serotype Ia (strain ATCC 27591 / A909 / CDC SS700).